Reading from the N-terminus, the 283-residue chain is uncharacterized protein (283 aa).

The signal sequence occupies residues 1 to 21 (MKLKLKFLLISLLGSSLLLSA). C22 is lipidated: N-palmitoyl cysteine. C22 carries the S-diacylglycerol cysteine lipid modification.

The protein belongs to the MG439/MG440 family.

It is found in the cell membrane. This is an uncharacterized protein from Mycoplasma pneumoniae (strain ATCC 29342 / M129 / Subtype 1) (Mycoplasmoides pneumoniae).